Reading from the N-terminus, the 76-residue chain is Sulfur carrier protein TusA (76 aa).

Cysteine 15 functions as the Cysteine persulfide intermediate in the catalytic mechanism.

Belongs to the sulfur carrier protein TusA family. Mostly a monomer, a small portion forms homodimer via intermolecular disulfide bonds. Tightly interacts with DsrEFH.

The protein localises to the cytoplasm. It functions in the pathway energy metabolism; sulfur metabolism. Functionally, sulfur carrier protein involved in sulfur trafficking for oxidative dissimilatory sulfur metabolism. Component of a sulfur relay system that starts with the sulfur-mobilizing rhodanese-like protein Rhd_2599 (Alvin_2599), which transfers the sulfur from a low-molecular-weight thiol, maybe glutathione, to the TusA protein (Alvin_2600); TusA serves as the sulfur donor for DsrEFH, which persulfurates DsrC; persulfurated DsrC very probably serves as a direct substrate for reverse-acting sulfite reductase, DsrAB. TusA seems to be not exclusively dedicated to sulfur oxidation and may have other important roles in the cell. Might also act as a sulfur mediator required for 2-thiouridine formation of tRNA. This chain is Sulfur carrier protein TusA, found in Allochromatium vinosum (strain ATCC 17899 / DSM 180 / NBRC 103801 / NCIMB 10441 / D) (Chromatium vinosum).